Consider the following 313-residue polypeptide: GTP cyclohydrolase MptA (313 aa).

Belongs to the GTP cyclohydrolase IV family. Homodimer. Fe(2+) is required as a cofactor.

The enzyme catalyses GTP + H2O = 7,8-dihydroneopterin 2',3'-cyclic phosphate + formate + diphosphate + H(+). Its pathway is cofactor biosynthesis; 5,6,7,8-tetrahydromethanopterin biosynthesis. With respect to regulation, inhibited by GTP concentrations greater than 0.3 mM and by 2-amino-5-formylamino-6-ribofuranosylamino-4(3H)-pyrimidinone 5'-phosphate (fapyGMP). Partial inhibition is observed when 2 mM GMP, dGTP, or 7-methyl-GTP was included along with 2 mM GTP. Converts GTP to 7,8-dihydro-D-neopterin 2',3'-cyclic phosphate, the first intermediate in the biosynthesis of coenzyme methanopterin. It is also able to utilize a variety of GTP analogs as substrates, including GDP, beta,gamma-methylene-GTP and GTP-[gamma-thio]. This Methanocaldococcus jannaschii (strain ATCC 43067 / DSM 2661 / JAL-1 / JCM 10045 / NBRC 100440) (Methanococcus jannaschii) protein is GTP cyclohydrolase MptA (mptA).